The sequence spans 169 residues: Transcription antitermination protein NusB (169 aa).

The interval 150-169 (AAATSRRTETAGGESNDAGS) is disordered.

It belongs to the NusB family.

Involved in transcription antitermination. Required for transcription of ribosomal RNA (rRNA) genes. Binds specifically to the boxA antiterminator sequence of the ribosomal RNA (rrn) operons. The sequence is that of Transcription antitermination protein NusB from Rhodococcus jostii (strain RHA1).